Here is a 383-residue protein sequence, read N- to C-terminus: Caspase a (383 aa).

The propeptide occupies Met1–Val142. Residues His8 to Glu81 form the Pyrin domain. A disordered region spans residues Thr87–Asp106. Active-site residues include His220 and Cys270. Residues His275 to Phe296 constitute a propeptide that is removed on maturation.

Belongs to the peptidase C14A family. As to quaternary structure, heterotetramer that consists of two anti-parallel arranged heterodimers, each one formed by a 20 kDa (p20) and a 10 kDa (p10) subunit. Interacts (via pyrin domain) with pycard (via pyrin domain). Interacts with caspb. Component of NLRP1 inflammasomes. Inflammasomes are supramolecular complexes that assemble in the cytosol in response to pathogens and other damage-associated signals and play critical roles in innate immunity and inflammation. The NLRP1 inflammasome is composed of the signal sensor nlrp1, and the adapter pycard (asc), which recruit effector pro-inflammatory caspases caspa and/or caspb. The interaction between nlrp1 and pycard is required for the sequential recruitment of caspa and then caspb. Caspa is preferentially recruited first and this causes the cleavage of pro-il1b into the midformed il1b. This is followed by the recruitment of caspb, which is activated and cleaves the midformed il1b resulting in il1b maturation. Interacts with caiap. The two subunits are derived from the precursor sequence by an autocatalytic mechanism.

The protein resides in the inflammasome. Its subcellular location is the cytoplasm. The enzyme catalyses Strict requirement for an Asp residue at position P1 and has a preferred cleavage sequence of Tyr-Val-Ala-Asp-|-.. Its function is as follows. Thiol protease which cleaves IL-1 beta (il1b), releasing the mature cytokine which is involved in a variety of inflammatory processes, and mediates apoptosis. Component of the NLRP1 inflammasome, which plays a crucial role in innate immunity and inflammation. In response to pathogens and other damage-associated signals, recruited to the NLRP1 inflammasome in its precursor form. Its subsequent activation causes the cleavage of pro-il1b into the midformed il1b, which then evetually leads to il1b maturation and secretion in the extracellular milieu. Required for the development of the cartilaginous pharyngeal skeleton. This Danio rerio (Zebrafish) protein is Caspase a.